The chain runs to 220 residues: UPF0758 protein Asuc_0013 (220 aa).

The 123-residue stretch at 98–220 (EFTNPLTVRL…YFSFAEQDWL (123 aa)) folds into the MPN domain. Positions 169, 171, and 182 each coordinate Zn(2+). The short motif at 169–182 (HNHPSGSAEPSASD) is the JAMM motif element.

Belongs to the UPF0758 family.

The chain is UPF0758 protein Asuc_0013 from Actinobacillus succinogenes (strain ATCC 55618 / DSM 22257 / CCUG 43843 / 130Z).